The sequence spans 676 residues: DNA ligase (676 aa).

Residues 34-38 (DAEYD), 84-85 (SL), and glutamate 116 each bind NAD(+). Lysine 118 functions as the N6-AMP-lysine intermediate in the catalytic mechanism. Residues arginine 139, glutamate 174, lysine 294, and lysine 318 each contribute to the NAD(+) site. Positions 412, 415, 428, and 433 each coordinate Zn(2+). The BRCT domain occupies 589–676 (KGGEALKGLT…RTGKKAEELV (88 aa)).

This sequence belongs to the NAD-dependent DNA ligase family. LigA subfamily. It depends on Mg(2+) as a cofactor. The cofactor is Mn(2+).

It catalyses the reaction NAD(+) + (deoxyribonucleotide)n-3'-hydroxyl + 5'-phospho-(deoxyribonucleotide)m = (deoxyribonucleotide)n+m + AMP + beta-nicotinamide D-nucleotide.. DNA ligase that catalyzes the formation of phosphodiester linkages between 5'-phosphoryl and 3'-hydroxyl groups in double-stranded DNA using NAD as a coenzyme and as the energy source for the reaction. It is essential for DNA replication and repair of damaged DNA. The protein is DNA ligase of Thermus thermophilus (strain ATCC BAA-163 / DSM 7039 / HB27).